A 609-amino-acid polypeptide reads, in one-letter code: uncharacterized protein (609 aa).

This sequence belongs to the NodU/CmcH family.

This is an uncharacterized protein from Methanocaldococcus jannaschii (strain ATCC 43067 / DSM 2661 / JAL-1 / JCM 10045 / NBRC 100440) (Methanococcus jannaschii).